A 1059-amino-acid polypeptide reads, in one-letter code: Carbamoyl phosphate synthase large chain (1059 aa).

Residues 1 to 401 (MPKRSDIKKI…SLLKACRSLE (401 aa)) form a carboxyphosphate synthetic domain region. ATP-binding residues include R129, R169, G175, G176, R208, I210, E215, G241, I242, H243, Q284, and E298. The 195-residue stretch at 133–327 (KQLMEELEQP…IAKLAAKIAV (195 aa)) folds into the ATP-grasp 1 domain. Positions 284, 298, and 300 each coordinate Mg(2+). Residues Q284, E298, and N300 each coordinate Mn(2+). Residues 402 to 546 (IGVYHNEMSE…YSTYEWENES (145 aa)) are oligomerization domain. The segment at 547-929 (IKSDKESVIV…ALYKAFEASY (383 aa)) is carbamoyl phosphate synthetic domain. The region spanning 671–861 (EQALKDLDIP…MAQVATNLIL (191 aa)) is the ATP-grasp 2 domain. Positions 707, 746, 748, 752, 777, 778, 779, 780, 820, and 832 each coordinate ATP. Positions 820, 832, and 834 each coordinate Mg(2+). The Mn(2+) site is built by Q820, E832, and N834. The MGS-like domain maps to 930–1059 (LHLPTFGNVI…ESRSFTTEAI (130 aa)). An allosteric domain region spans residues 930–1059 (LHLPTFGNVI…ESRSFTTEAI (130 aa)).

The protein belongs to the CarB family. In terms of assembly, composed of two chains; the small (or glutamine) chain promotes the hydrolysis of glutamine to ammonia, which is used by the large (or ammonia) chain to synthesize carbamoyl phosphate. Tetramer of heterodimers (alpha,beta)4. Mg(2+) serves as cofactor. The cofactor is Mn(2+).

It catalyses the reaction hydrogencarbonate + L-glutamine + 2 ATP + H2O = carbamoyl phosphate + L-glutamate + 2 ADP + phosphate + 2 H(+). The catalysed reaction is hydrogencarbonate + NH4(+) + 2 ATP = carbamoyl phosphate + 2 ADP + phosphate + 2 H(+). It functions in the pathway amino-acid biosynthesis; L-arginine biosynthesis; carbamoyl phosphate from bicarbonate: step 1/1. The protein operates within pyrimidine metabolism; UMP biosynthesis via de novo pathway; (S)-dihydroorotate from bicarbonate: step 1/3. Large subunit of the glutamine-dependent carbamoyl phosphate synthetase (CPSase). CPSase catalyzes the formation of carbamoyl phosphate from the ammonia moiety of glutamine, carbonate, and phosphate donated by ATP, constituting the first step of 2 biosynthetic pathways, one leading to arginine and/or urea and the other to pyrimidine nucleotides. The large subunit (synthetase) binds the substrates ammonia (free or transferred from glutamine from the small subunit), hydrogencarbonate and ATP and carries out an ATP-coupled ligase reaction, activating hydrogencarbonate by forming carboxy phosphate which reacts with ammonia to form carbamoyl phosphate. The chain is Carbamoyl phosphate synthase large chain from Streptococcus thermophilus (strain ATCC BAA-250 / LMG 18311).